The primary structure comprises 296 residues: Glycine--tRNA ligase alpha subunit (296 aa).

The protein belongs to the class-II aminoacyl-tRNA synthetase family. In terms of assembly, tetramer of two alpha and two beta subunits.

Its subcellular location is the cytoplasm. It catalyses the reaction tRNA(Gly) + glycine + ATP = glycyl-tRNA(Gly) + AMP + diphosphate. The protein is Glycine--tRNA ligase alpha subunit of Listeria monocytogenes serotype 4a (strain HCC23).